Reading from the N-terminus, the 431-residue chain is Histidinol dehydrogenase (431 aa).

The NAD(+) site is built by Tyr127, Gln185, and Asn208. The substrate site is built by Ser234, Gln256, and His259. Zn(2+) is bound by residues Gln256 and His259. Residues Glu323 and His324 each act as proton acceptor in the active site. Residues His324, Asp357, Glu411, and His416 each contribute to the substrate site. Asp357 contacts Zn(2+). Residue His416 participates in Zn(2+) binding.

It belongs to the histidinol dehydrogenase family. It depends on Zn(2+) as a cofactor.

The catalysed reaction is L-histidinol + 2 NAD(+) + H2O = L-histidine + 2 NADH + 3 H(+). It participates in amino-acid biosynthesis; L-histidine biosynthesis; L-histidine from 5-phospho-alpha-D-ribose 1-diphosphate: step 9/9. Its function is as follows. Catalyzes the sequential NAD-dependent oxidations of L-histidinol to L-histidinaldehyde and then to L-histidine. This Vibrio parahaemolyticus serotype O3:K6 (strain RIMD 2210633) protein is Histidinol dehydrogenase.